The sequence spans 162 residues: Xanthine-guanine phosphoribosyltransferase (162 aa).

5-phospho-alpha-D-ribose 1-diphosphate-binding positions include 41–42 (RG) and 92–100 (DDLVDTGNT). Asp-93 is a Mg(2+) binding site. The guanine site is built by Asp-96 and Ile-139. 2 residues coordinate xanthine: Asp-96 and Ile-139. GMP is bound by residues 96 to 100 (DTGNT) and 138 to 139 (WI).

Belongs to the purine/pyrimidine phosphoribosyltransferase family. XGPT subfamily. As to quaternary structure, homotetramer. Requires Mg(2+) as cofactor.

Its subcellular location is the cell inner membrane. It carries out the reaction GMP + diphosphate = guanine + 5-phospho-alpha-D-ribose 1-diphosphate. The enzyme catalyses XMP + diphosphate = xanthine + 5-phospho-alpha-D-ribose 1-diphosphate. It catalyses the reaction IMP + diphosphate = hypoxanthine + 5-phospho-alpha-D-ribose 1-diphosphate. The protein operates within purine metabolism; GMP biosynthesis via salvage pathway; GMP from guanine: step 1/1. It participates in purine metabolism; XMP biosynthesis via salvage pathway; XMP from xanthine: step 1/1. In terms of biological role, purine salvage pathway enzyme that catalyzes the transfer of the ribosyl-5-phosphate group from 5-phospho-alpha-D-ribose 1-diphosphate (PRPP) to the N9 position of the 6-oxopurines guanine and xanthine to form the corresponding ribonucleotides GMP (guanosine 5'-monophosphate) and XMP (xanthosine 5'-monophosphate), with the release of PPi. To a lesser extent, also acts on hypoxanthine. In Chromohalobacter salexigens (strain ATCC BAA-138 / DSM 3043 / CIP 106854 / NCIMB 13768 / 1H11), this protein is Xanthine-guanine phosphoribosyltransferase.